Consider the following 157-residue polypeptide: Phosphopantetheine adenylyltransferase (157 aa).

T8 lines the substrate pocket. Residues 8–9 and H16 contribute to the ATP site; that span reads TF. Substrate contacts are provided by K40, T72, and R86. ATP is bound by residues 87–89, E97, and 122–128; these read GLR and YSFLSSS.

Belongs to the bacterial CoaD family. Homohexamer. Mg(2+) serves as cofactor.

It localises to the cytoplasm. The catalysed reaction is (R)-4'-phosphopantetheine + ATP + H(+) = 3'-dephospho-CoA + diphosphate. Its pathway is cofactor biosynthesis; coenzyme A biosynthesis; CoA from (R)-pantothenate: step 4/5. In terms of biological role, reversibly transfers an adenylyl group from ATP to 4'-phosphopantetheine, yielding dephospho-CoA (dPCoA) and pyrophosphate. The protein is Phosphopantetheine adenylyltransferase of Prochlorococcus marinus (strain MIT 9312).